Here is a 486-residue protein sequence, read N- to C-terminus: Carboxypeptidase Y homolog ARB_07161 (486 aa).

The N-terminal stretch at 1–17 (MKGLLSLLLVGAANALA) is a signal peptide. N-linked (GlcNAc...) asparagine glycosylation occurs at N111. S241 is a catalytic residue. Disulfide bonds link C281-C305, C288-C298, and C327-C334. The active site involves D403. C406 serves as a coordination point for substrate. N430 is a glycosylation site (N-linked (GlcNAc...) asparagine). H462 is an active-site residue.

The protein belongs to the peptidase S10 family.

The protein localises to the secreted. The enzyme catalyses Release of a C-terminal amino acid with broad specificity.. Functionally, involved in degradation of small peptides. The sequence is that of Carboxypeptidase Y homolog ARB_07161 from Arthroderma benhamiae (strain ATCC MYA-4681 / CBS 112371) (Trichophyton mentagrophytes).